The primary structure comprises 407 residues: 1-deoxy-D-xylulose 5-phosphate reductoisomerase (407 aa).

T10, G11, S12, I13, G36, and N131 together coordinate NADPH. Position 132 (K132) interacts with 1-deoxy-D-xylulose 5-phosphate. E133 provides a ligand contact to NADPH. Residue D155 coordinates Mn(2+). The 1-deoxy-D-xylulose 5-phosphate site is built by S156, E157, S181, and H204. E157 serves as a coordination point for Mn(2+). G210 serves as a coordination point for NADPH. 1-deoxy-D-xylulose 5-phosphate-binding residues include S217, N222, K223, and E226. Residue E226 coordinates Mn(2+).

Belongs to the DXR family. It depends on Mg(2+) as a cofactor. Mn(2+) is required as a cofactor.

The catalysed reaction is 2-C-methyl-D-erythritol 4-phosphate + NADP(+) = 1-deoxy-D-xylulose 5-phosphate + NADPH + H(+). It participates in isoprenoid biosynthesis; isopentenyl diphosphate biosynthesis via DXP pathway; isopentenyl diphosphate from 1-deoxy-D-xylulose 5-phosphate: step 1/6. Functionally, catalyzes the NADPH-dependent rearrangement and reduction of 1-deoxy-D-xylulose-5-phosphate (DXP) to 2-C-methyl-D-erythritol 4-phosphate (MEP). This Cutibacterium acnes (strain DSM 16379 / KPA171202) (Propionibacterium acnes) protein is 1-deoxy-D-xylulose 5-phosphate reductoisomerase.